Reading from the N-terminus, the 331-residue chain is Ketol-acid reductoisomerase (NADP(+)) (331 aa).

The region spanning 2–182 (ARMYYDEDAN…GGTRGGVLET (181 aa)) is the KARI N-terminal Rossmann domain. NADP(+) contacts are provided by residues 25–28 (YGSQ), Ser-51, Ser-53, and 83–86 (DEVQ). His-108 is an active-site residue. Gly-134 serves as a coordination point for NADP(+). A KARI C-terminal knotted domain is found at 183–328 (TFREETETDL…KDLRAMFSWL (146 aa)). Asp-191, Glu-195, Glu-227, and Glu-231 together coordinate Mg(2+). Residue Ser-252 participates in substrate binding.

Belongs to the ketol-acid reductoisomerase family. The cofactor is Mg(2+).

The catalysed reaction is (2R)-2,3-dihydroxy-3-methylbutanoate + NADP(+) = (2S)-2-acetolactate + NADPH + H(+). It catalyses the reaction (2R,3R)-2,3-dihydroxy-3-methylpentanoate + NADP(+) = (S)-2-ethyl-2-hydroxy-3-oxobutanoate + NADPH + H(+). Its pathway is amino-acid biosynthesis; L-isoleucine biosynthesis; L-isoleucine from 2-oxobutanoate: step 2/4. It participates in amino-acid biosynthesis; L-valine biosynthesis; L-valine from pyruvate: step 2/4. Functionally, involved in the biosynthesis of branched-chain amino acids (BCAA). Catalyzes an alkyl-migration followed by a ketol-acid reduction of (S)-2-acetolactate (S2AL) to yield (R)-2,3-dihydroxy-isovalerate. In the isomerase reaction, S2AL is rearranged via a Mg-dependent methyl migration to produce 3-hydroxy-3-methyl-2-ketobutyrate (HMKB). In the reductase reaction, this 2-ketoacid undergoes a metal-dependent reduction by NADPH to yield (R)-2,3-dihydroxy-isovalerate. In Nostoc sp. (strain PCC 7120 / SAG 25.82 / UTEX 2576), this protein is Ketol-acid reductoisomerase (NADP(+)).